The following is a 1006-amino-acid chain: Kinesin-like protein KIN-5C (1006 aa).

One can recognise a Kinesin motor domain in the interval 9–355; it reads NVQVLLRCRP…LDYAHRAKNI (347 aa). Position 95-102 (95-102) interacts with ATP; the sequence is GQTGTGKT. The stretch at 371 to 522 forms a coiled coil; it reads IKDLYGEIER…NASLFQKIAR (152 aa).

The protein belongs to the TRAFAC class myosin-kinesin ATPase superfamily. Kinesin family. KIN-5/BimC subfamily.

It is found in the cytoplasm. The protein localises to the cytoskeleton. It localises to the spindle. In terms of biological role, responsible for microtubule translocation. May be important for the organization of phragmoplast-specific arrays of microtubules. Plays an essential role in stabilizing the mitotic spindle. Required during mitotic cytokinesis. The polypeptide is Kinesin-like protein KIN-5C (Nicotiana tabacum (Common tobacco)).